A 206-amino-acid chain; its full sequence is Thymidylate kinase (206 aa).

10–17 contacts ATP; the sequence is GIDGAGKS.

Belongs to the thymidylate kinase family.

The catalysed reaction is dTMP + ATP = dTDP + ADP. In terms of biological role, phosphorylation of dTMP to form dTDP in both de novo and salvage pathways of dTTP synthesis. The protein is Thymidylate kinase of Neisseria gonorrhoeae (strain ATCC 700825 / FA 1090).